The following is a 258-amino-acid chain: Global transcriptional regulator CodY (258 aa).

The segment at 1–156 is GAF domain; the sequence is MSSLLSKTRR…SATIVGMEML (156 aa). The H-T-H motif DNA-binding region spans 204-223; that stretch reads ASKIADKVGITRSVIVNALR.

It belongs to the CodY family.

It is found in the cytoplasm. In terms of biological role, DNA-binding global transcriptional regulator which is involved in the adaptive response to starvation and acts by directly or indirectly controlling the expression of numerous genes in response to nutrient availability. During rapid exponential growth, CodY is highly active and represses genes whose products allow adaptation to nutrient depletion. This is Global transcriptional regulator CodY from Clostridium botulinum (strain Eklund 17B / Type B).